Here is a 1462-residue protein sequence, read N- to C-terminus: Gag-Pol polyprotein (1462 aa).

A lipid anchor (N-myristoyl glycine; by host) is attached at Gly-2. Residues 7–31 (VLRGKKADELEKVRLRPGGKKKYKL) are interaction with Gp41. A Nuclear export signal motif is present at residues 16 to 22 (LEKVRLR). A Nuclear localization signal motif is present at residues 26–32 (KKKYKLK). The disordered stretch occupies residues 111–136 (ETGTAEKMPDTSRPTAPPSGKGGNYP). A Phosphotyrosine; by host modification is found at Tyr-135. Positions 191–228 (NCVGDHQAAMQIIREIINEEAADWDANHPIPGPLPAGQ) are interaction with human PPIA/CYPA and NUP153. The dimerization/Multimerization of capsid protein p24 stretch occupies residues 279–365 (YNPTNILDIK…GGPGQKARLM (87 aa)). 2 consecutive CCHC-type zinc fingers follow at residues 389–406 (IKCWNCGKEGHSARQCRA) and 410–427 (QGCWKCGKPGHIMTNCPD). Positions 439–510 (GKEAPQFPRG…GPMQGDNRGL (72 aa)) are disordered. A compositionally biased stretch (low complexity) spans 456 to 469 (TNSTPIGSSSGSTG). Over residues 473–491 (AAREKAEGAETETIQRGDR) the composition is skewed to basic and acidic residues. Residues 513–517 (PQFSL) are dimerization of protease. One can recognise a Peptidase A2 domain in the interval 532-601 (VEVLLDTGAD…TPINIFGRNI (70 aa)). Catalysis depends on Asp-537, which acts as the For protease activity; shared with dimeric partner. Dimerization of protease regions lie at residues 561–567 (GIGGFIN) and 600–612 (NILTALGMSLNLP). A Reverse transcriptase domain is found at 655-845 (EGQLEEAPPT…PPYRWMGYEL (191 aa)). The Mg(2+) site is built by Asp-721, Asp-796, and Asp-797. Residues 838-846 (YRWMGYELW) are RT 'primer grip'. Positions 1007-1023 (WEQWWDNYWQVTWIPDW) match the Tryptophan repeat motif motif. The 124-residue stretch at 1043-1166 (IPGTETFYTD…VDHLVSQGIR (124 aa)) folds into the RNase H type-1 domain. The Mg(2+) site is built by Asp-1052, Glu-1087, Asp-1107, and Asp-1158. An Integrase-type; degenerate zinc finger spans residues 1172–1213 (EKIEPAQEEHEKYHTNVKELCHKFDIPQLVARQIVNTCAQYQ). One can recognise an Integrase catalytic domain in the interval 1222–1373 (QVNAEVGTWQ…TPSERLINMI (152 aa)). Residues Asp-1233, Asp-1285, and Glu-1321 each contribute to the Mg(2+) site. The integrase-type DNA-binding region spans 1392 to 1439 (FRVYFREGRDQLWKGPGELLWKGDGAVIVKVGTDIKIIPRRKAKIIRD).

As to quaternary structure, homotrimer; further assembles as hexamers of trimers. Interacts with gp41 (via C-terminus). Interacts with host CALM1; this interaction induces a conformational change in the Matrix protein, triggering exposure of the myristate group. Interacts with host AP3D1; this interaction allows the polyprotein trafficking to multivesicular bodies during virus assembly. Part of the pre-integration complex (PIC) which is composed of viral genome, matrix protein, Vpr and integrase. Homodimer; the homodimer further multimerizes as homohexamers or homopentamers. Interacts with human PPIA/CYPA. Interacts with human NUP153. Interacts with host PDZD8; this interaction stabilizes the capsid. Interacts with monkey TRIM5; this interaction destabilizes the capsid. In terms of assembly, homodimer, whose active site consists of two apposed aspartic acid residues. As to quaternary structure, heterodimer of p66 RT and p51 RT (RT p66/p51). Heterodimerization of RT is essential for DNA polymerase activity. The overall folding of the subdomains is similar in p66 RT and p51 RT but the spatial arrangements of the subdomains are dramatically different. Homotetramer; may further associate as a homohexadecamer. Part of the pre-integration complex (PIC) which is composed of viral genome, matrix protein, Vpr and integrase. Interacts with human SMARCB1/INI1 and human PSIP1/LEDGF isoform 1. Interacts with human KPNA3; this interaction might play a role in nuclear import of the pre-integration complex. Interacts with human NUP153; this interaction might play a role in nuclear import of the pre-integration complex. Mg(2+) is required as a cofactor. In terms of processing, specific enzymatic cleavages by the viral protease yield mature proteins. The protease is released by autocatalytic cleavage. The polyprotein is cleaved during and after budding, this process is termed maturation. Proteolytic cleavage of p66 RT removes the RNase H domain to yield the p51 RT subunit. Nucleocapsid protein p7 might be further cleaved after virus entry.

It is found in the host cell membrane. The protein localises to the host endosome. Its subcellular location is the host multivesicular body. The protein resides in the virion membrane. It localises to the host nucleus. It is found in the host cytoplasm. The protein localises to the virion. The catalysed reaction is Endopeptidase for which the P1 residue is preferably hydrophobic.. The enzyme catalyses Endohydrolysis of RNA in RNA/DNA hybrids. Three different cleavage modes: 1. sequence-specific internal cleavage of RNA. Human immunodeficiency virus type 1 and Moloney murine leukemia virus enzymes prefer to cleave the RNA strand one nucleotide away from the RNA-DNA junction. 2. RNA 5'-end directed cleavage 13-19 nucleotides from the RNA end. 3. DNA 3'-end directed cleavage 15-20 nucleotides away from the primer terminus.. It carries out the reaction 3'-end directed exonucleolytic cleavage of viral RNA-DNA hybrid.. It catalyses the reaction DNA(n) + a 2'-deoxyribonucleoside 5'-triphosphate = DNA(n+1) + diphosphate. Its activity is regulated as follows. Protease: The viral protease is inhibited by many synthetic protease inhibitors (PIs), such as amprenavir, atazanavir, indinavir, loprinavir, nelfinavir, ritonavir and saquinavir. Use of protease inhibitors in tritherapy regimens permit more ambitious therapeutic strategies. Reverse transcriptase/ribonuclease H: RT can be inhibited either by nucleoside RT inhibitors (NRTIs) or by non nucleoside RT inhibitors (NNRTIs). NRTIs act as chain terminators, whereas NNRTIs inhibit DNA polymerization by binding a small hydrophobic pocket near the RT active site and inducing an allosteric change in this region. Classical NRTIs are abacavir, adefovir (PMEA), didanosine (ddI), lamivudine (3TC), stavudine (d4T), tenofovir (PMPA), zalcitabine (ddC), and zidovudine (AZT). Classical NNRTIs are atevirdine (BHAP U-87201E), delavirdine, efavirenz (DMP-266), emivirine (I-EBU), and nevirapine (BI-RG-587). The tritherapies used as a basic effective treatment of AIDS associate two NRTIs and one NNRTI. In terms of biological role, mediates, with Gag polyprotein, the essential events in virion assembly, including binding the plasma membrane, making the protein-protein interactions necessary to create spherical particles, recruiting the viral Env proteins, and packaging the genomic RNA via direct interactions with the RNA packaging sequence (Psi). Gag-Pol polyprotein may regulate its own translation, by the binding genomic RNA in the 5'-UTR. At low concentration, the polyprotein would promote translation, whereas at high concentration, the polyprotein would encapsidate genomic RNA and then shut off translation. Functionally, targets the polyprotein to the plasma membrane via a multipartite membrane-binding signal, that includes its myristoylated N-terminus. Matrix protein is part of the pre-integration complex. Implicated in the release from host cell mediated by Vpu. Binds to RNA. Its function is as follows. Forms the conical core that encapsulates the genomic RNA-nucleocapsid complex in the virion. Most core are conical, with only 7% tubular. The core is constituted by capsid protein hexamer subunits. The core is disassembled soon after virion entry. Host restriction factors such as TRIM5-alpha or TRIMCyp bind retroviral capsids and cause premature capsid disassembly, leading to blocks in reverse transcription. Capsid restriction by TRIM5 is one of the factors which restricts HIV-1 to the human species. Host PIN1 apparently facilitates the virion uncoating. On the other hand, interactions with PDZD8 or CYPA stabilize the capsid. Encapsulates and protects viral dimeric unspliced genomic RNA (gRNA). Binds these RNAs through its zinc fingers. Acts as a nucleic acid chaperone which is involved in rearangement of nucleic acid secondary structure during gRNA retrotranscription. Also facilitates template switch leading to recombination. As part of the polyprotein, participates in gRNA dimerization, packaging, tRNA incorporation and virion assembly. In terms of biological role, aspartyl protease that mediates proteolytic cleavages of Gag and Gag-Pol polyproteins during or shortly after the release of the virion from the plasma membrane. Cleavages take place as an ordered, step-wise cascade to yield mature proteins. This process is called maturation. Displays maximal activity during the budding process just prior to particle release from the cell. Also cleaves Nef and Vif, probably concomitantly with viral structural proteins on maturation of virus particles. Hydrolyzes host EIF4GI and PABP1 in order to shut off the capped cellular mRNA translation. The resulting inhibition of cellular protein synthesis serves to ensure maximal viral gene expression and to evade host immune response. Functionally, multifunctional enzyme that converts the viral RNA genome into dsDNA in the cytoplasm, shortly after virus entry into the cell. This enzyme displays a DNA polymerase activity that can copy either DNA or RNA templates, and a ribonuclease H (RNase H) activity that cleaves the RNA strand of RNA-DNA heteroduplexes in a partially processive 3' to 5' endonucleasic mode. Conversion of viral genomic RNA into dsDNA requires many steps. A tRNA(3)-Lys binds to the primer-binding site (PBS) situated at the 5'-end of the viral RNA. RT uses the 3' end of the tRNA primer to perform a short round of RNA-dependent minus-strand DNA synthesis. The reading proceeds through the U5 region and ends after the repeated (R) region which is present at both ends of viral RNA. The portion of the RNA-DNA heteroduplex is digested by the RNase H, resulting in a ssDNA product attached to the tRNA primer. This ssDNA/tRNA hybridizes with the identical R region situated at the 3' end of viral RNA. This template exchange, known as minus-strand DNA strong stop transfer, can be either intra- or intermolecular. RT uses the 3' end of this newly synthesized short ssDNA to perform the RNA-dependent minus-strand DNA synthesis of the whole template. RNase H digests the RNA template except for two polypurine tracts (PPTs) situated at the 5'-end and near the center of the genome. It is not clear if both polymerase and RNase H activities are simultaneous. RNase H probably can proceed both in a polymerase-dependent (RNA cut into small fragments by the same RT performing DNA synthesis) and a polymerase-independent mode (cleavage of remaining RNA fragments by free RTs). Secondly, RT performs DNA-directed plus-strand DNA synthesis using the PPTs that have not been removed by RNase H as primers. PPTs and tRNA primers are then removed by RNase H. The 3' and 5' ssDNA PBS regions hybridize to form a circular dsDNA intermediate. Strand displacement synthesis by RT to the PBS and PPT ends produces a blunt ended, linear dsDNA copy of the viral genome that includes long terminal repeats (LTRs) at both ends. Its function is as follows. Catalyzes viral DNA integration into the host chromosome, by performing a series of DNA cutting and joining reactions. This enzyme activity takes place after virion entry into a cell and reverse transcription of the RNA genome in dsDNA. The first step in the integration process is 3' processing. This step requires a complex comprising the viral genome, matrix protein, Vpr and integrase. This complex is called the pre-integration complex (PIC). The integrase protein removes 2 nucleotides from each 3' end of the viral DNA, leaving recessed CA OH's at the 3' ends. In the second step, the PIC enters cell nucleus. This process is mediated through integrase and Vpr proteins, and allows the virus to infect a non dividing cell. This ability to enter the nucleus is specific of lentiviruses, other retroviruses cannot and rely on cell division to access cell chromosomes. In the third step, termed strand transfer, the integrase protein joins the previously processed 3' ends to the 5' ends of strands of target cellular DNA at the site of integration. The 5'-ends are produced by integrase-catalyzed staggered cuts, 5 bp apart. A Y-shaped, gapped, recombination intermediate results, with the 5'-ends of the viral DNA strands and the 3' ends of target DNA strands remaining unjoined, flanking a gap of 5 bp. The last step is viral DNA integration into host chromosome. This involves host DNA repair synthesis in which the 5 bp gaps between the unjoined strands are filled in and then ligated. Since this process occurs at both cuts flanking the HIV genome, a 5 bp duplication of host DNA is produced at the ends of HIV-1 integration. Alternatively, Integrase may catalyze the excision of viral DNA just after strand transfer, this is termed disintegration. The chain is Gag-Pol polyprotein (gag-pol) from Homo sapiens (Human).